Reading from the N-terminus, the 190-residue chain is Threonylcarbamoyl-AMP synthase (190 aa).

Positions 8–190 constitute a YrdC-like domain; sequence RFRIRQCAAR…DAESGAVIRA (183 aa).

It belongs to the SUA5 family. TsaC subfamily.

Its subcellular location is the cytoplasm. It carries out the reaction L-threonine + hydrogencarbonate + ATP = L-threonylcarbamoyladenylate + diphosphate + H2O. Required for the formation of a threonylcarbamoyl group on adenosine at position 37 (t(6)A37) in tRNAs that read codons beginning with adenine. Catalyzes the conversion of L-threonine, HCO(3)(-)/CO(2) and ATP to give threonylcarbamoyl-AMP (TC-AMP) as the acyladenylate intermediate, with the release of diphosphate. The sequence is that of Threonylcarbamoyl-AMP synthase from Alkalilimnicola ehrlichii (strain ATCC BAA-1101 / DSM 17681 / MLHE-1).